The chain runs to 437 residues: Chromosomal replication initiator protein DnaA (437 aa).

Residues 1–69 are domain I, interacts with DnaA modulators; the sequence is MLGDTTLKQL…AHLFELSTGI (69 aa). Residues 69–100 form a domain II region; sequence IRPKIEIRLGSLKKDVKSSSPKAGVSKGQKST. A domain III, AAA+ region region spans residues 101 to 315; sequence ILNPSFTFDS…GIIIKLNAYA (215 aa). ATP contacts are provided by Gly-145, Gly-147, Lys-148, and Thr-149. Positions 316-437 are domain IV, binds dsDNA; that stretch reads NLMNQEITLQ…ELKNKIKSRN (122 aa).

Belongs to the DnaA family. In terms of assembly, oligomerizes as a right-handed, spiral filament on DNA at oriC.

It localises to the cytoplasm. In terms of biological role, plays an essential role in the initiation and regulation of chromosomal replication. ATP-DnaA binds to the origin of replication (oriC) to initiate formation of the DNA replication initiation complex once per cell cycle. Binds the DnaA box (a 9 base pair repeat at the origin) and separates the double-stranded (ds)DNA. Forms a right-handed helical filament on oriC DNA; dsDNA binds to the exterior of the filament while single-stranded (ss)DNA is stabiized in the filament's interior. The ATP-DnaA-oriC complex binds and stabilizes one strand of the AT-rich DNA unwinding element (DUE), permitting loading of DNA polymerase. After initiation quickly degrades to an ADP-DnaA complex that is not apt for DNA replication. Binds acidic phospholipids. The sequence is that of Chromosomal replication initiator protein DnaA from Wolinella succinogenes (strain ATCC 29543 / DSM 1740 / CCUG 13145 / JCM 31913 / LMG 7466 / NCTC 11488 / FDC 602W) (Vibrio succinogenes).